Reading from the N-terminus, the 566-residue chain is Cytokine-like nuclear factor N-PAC (566 aa).

Positions 9 to 70 constitute a PWWP domain; that stretch reads VNDLVWAKMK…ETQIKPYLQF (62 aa). Disordered regions lie at residues 127 to 147 and 206 to 234; these read VASG…NTTT and MLDD…SSLD. The segment at 274–566 is dehydrogenase domain; sequence RNIKASQLKF…ASAVYVRARF (293 aa). NAD(+) is bound by residues 284-298 and Lys518; that span reads GFLG…IVKN.

The protein belongs to the HIBADH-related family. NP60 subfamily. In terms of assembly, binds to mononucleosomes. Interacts with male-specific lethal (MSL) histone acetyltransferase complex at least composed of mof, msl-1, msl-2 and msl-3.

The protein localises to the chromosome. In terms of biological role, may have oxidoreductase activity. The protein is Cytokine-like nuclear factor N-PAC of Anopheles gambiae (African malaria mosquito).